A 546-amino-acid chain; its full sequence is ATP synthase subunit alpha (546 aa).

173-180 lines the ATP pocket; sequence GDRQTGKT. A disordered region spans residues 520–546; the sequence is VDKKTAPKSVTPVDQEQIKAGKAQEKK. Positions 535 to 546 are enriched in basic and acidic residues; that stretch reads EQIKAGKAQEKK.

Belongs to the ATPase alpha/beta chains family. As to quaternary structure, F-type ATPases have 2 components, CF(1) - the catalytic core - and CF(0) - the membrane proton channel. CF(1) has five subunits: alpha(3), beta(3), gamma(1), delta(1), epsilon(1). CF(0) has three main subunits: a(1), b(2) and c(9-12). The alpha and beta chains form an alternating ring which encloses part of the gamma chain. CF(1) is attached to CF(0) by a central stalk formed by the gamma and epsilon chains, while a peripheral stalk is formed by the delta and b chains.

It is found in the cell membrane. The enzyme catalyses ATP + H2O + 4 H(+)(in) = ADP + phosphate + 5 H(+)(out). Its function is as follows. Produces ATP from ADP in the presence of a proton gradient across the membrane. The alpha chain is a regulatory subunit. The polypeptide is ATP synthase subunit alpha (Bifidobacterium animalis subsp. lactis (strain AD011)).